The primary structure comprises 166 residues: Protein-export protein SecB (166 aa).

Belongs to the SecB family. In terms of assembly, homotetramer, a dimer of dimers. One homotetramer interacts with 1 SecA dimer.

Its subcellular location is the cytoplasm. In terms of biological role, one of the proteins required for the normal export of preproteins out of the cell cytoplasm. It is a molecular chaperone that binds to a subset of precursor proteins, maintaining them in a translocation-competent state. It also specifically binds to its receptor SecA. This chain is Protein-export protein SecB, found in Actinobacillus pleuropneumoniae serotype 7 (strain AP76).